The chain runs to 134 residues: NAD(P)H-quinone oxidoreductase subunit 3 (134 aa).

A run of 3 helical transmembrane segments spans residues 20 to 40 (GYDA…LALV), 78 to 98 (MFAL…PWAV), and 103 to 123 (LGLL…VALA).

The protein belongs to the complex I subunit 3 family. In terms of assembly, NDH-1 can be composed of about 15 different subunits; different subcomplexes with different compositions have been identified which probably have different functions.

It localises to the cellular thylakoid membrane. The catalysed reaction is a plastoquinone + NADH + (n+1) H(+)(in) = a plastoquinol + NAD(+) + n H(+)(out). The enzyme catalyses a plastoquinone + NADPH + (n+1) H(+)(in) = a plastoquinol + NADP(+) + n H(+)(out). Its function is as follows. NDH-1 shuttles electrons from an unknown electron donor, via FMN and iron-sulfur (Fe-S) centers, to quinones in the respiratory and/or the photosynthetic chain. The immediate electron acceptor for the enzyme in this species is believed to be plastoquinone. Couples the redox reaction to proton translocation, and thus conserves the redox energy in a proton gradient. Cyanobacterial NDH-1 also plays a role in inorganic carbon-concentration. In Prochlorococcus marinus (strain MIT 9303), this protein is NAD(P)H-quinone oxidoreductase subunit 3.